Reading from the N-terminus, the 122-residue chain is Crustacean hyperglycemic hormones 5 (122 aa).

An N-terminal signal peptide occupies residues 1–26 (MSLGLIASRLVAVALVVVVACSTTWA). 3 disulfides stabilise this stretch: Cys55/Cys91, Cys71/Cys87, and Cys74/Cys100. Val120 carries the post-translational modification Valine amide.

It belongs to the arthropod CHH/MIH/GIH/VIH hormone family.

Its subcellular location is the secreted. Functionally, hormone found in the sinus gland of isopods and decapods which controls the blood sugar level. Has a secretagogue action over the amylase released from the midgut gland. May act as a stress hormone and may be involved in the control of molting and reproduction. This Penaeus monodon (Giant tiger prawn) protein is Crustacean hyperglycemic hormones 5 (CHH5).